The primary structure comprises 276 residues: N-alpha-acetyltransferase 60 (276 aa).

The 206-residue stretch at 34 to 239 (VQLRFLVPDD…WTLLDHIKHY (206 aa)) folds into the N-acetyltransferase domain. Position 59 (Tyr-59) interacts with substrate. Residue Tyr-139 is part of the active site. Substrate is bound at residue Leu-141. Acetyl-CoA contacts are provided by residues 143 to 145 (LGV) and 151 to 156 (RNGIGS). His-180 is a catalytic residue. Acetyl-CoA-binding positions include Asn-185 and 192–195 (YEKR). The segment at 204-215 (PYYYNIRGKGKD) is required for homodimerization. Tyr-207 serves as a coordination point for substrate.

The protein belongs to the acetyltransferase family. NAA60 subfamily.

The catalysed reaction is N-terminal L-methionyl-[transmembrane protein] + acetyl-CoA = N-terminal N(alpha)-acetyl-L-methionyl-[transmembrane protein] + CoA + H(+). It catalyses the reaction L-lysyl-[protein] + acetyl-CoA = N(6)-acetyl-L-lysyl-[protein] + CoA + H(+). Its function is as follows. Displays alpha (N-terminal) acetyltransferase activity towards a range of N-terminal sequences including those starting with Met-Lys, Met-Val, Met-Ala and Met-Met. Required for normal chromosomal segregation during anaphase. In terms of biological role, shows histone acetyltransferase activity toward free histones. Does not show histone acetyltransferase activity toward free histones. The protein is N-alpha-acetyltransferase 60 of Drosophila melanogaster (Fruit fly).